A 307-amino-acid chain; its full sequence is Quinolinate synthase (307 aa).

Iminosuccinate contacts are provided by His-20 and Ser-37. Residue Cys-82 participates in [4Fe-4S] cluster binding. Iminosuccinate contacts are provided by residues 108-110 (YIN) and Ser-125. Residue Cys-168 participates in [4Fe-4S] cluster binding. Residues 194 to 196 (HPE) and Thr-219 contribute to the iminosuccinate site. Cys-264 provides a ligand contact to [4Fe-4S] cluster.

Belongs to the quinolinate synthase family. Type 2 subfamily. [4Fe-4S] cluster serves as cofactor.

It localises to the cytoplasm. It catalyses the reaction iminosuccinate + dihydroxyacetone phosphate = quinolinate + phosphate + 2 H2O + H(+). The protein operates within cofactor biosynthesis; NAD(+) biosynthesis; quinolinate from iminoaspartate: step 1/1. In terms of biological role, catalyzes the condensation of iminoaspartate with dihydroxyacetone phosphate to form quinolinate. The chain is Quinolinate synthase from Pyrobaculum aerophilum (strain ATCC 51768 / DSM 7523 / JCM 9630 / CIP 104966 / NBRC 100827 / IM2).